The chain runs to 215 residues: Protein-L-isoaspartate O-methyltransferase (215 aa).

Serine 62 is an active-site residue.

This sequence belongs to the methyltransferase superfamily. L-isoaspartyl/D-aspartyl protein methyltransferase family.

Its subcellular location is the cytoplasm. It carries out the reaction [protein]-L-isoaspartate + S-adenosyl-L-methionine = [protein]-L-isoaspartate alpha-methyl ester + S-adenosyl-L-homocysteine. Its function is as follows. Catalyzes the methyl esterification of L-isoaspartyl residues in peptides and proteins that result from spontaneous decomposition of normal L-aspartyl and L-asparaginyl residues. It plays a role in the repair and/or degradation of damaged proteins. The protein is Protein-L-isoaspartate O-methyltransferase of Ruegeria pomeroyi (strain ATCC 700808 / DSM 15171 / DSS-3) (Silicibacter pomeroyi).